The sequence spans 171 residues: Putative phosphoesterase ABC1741 (171 aa).

H34 functions as the Proton donor in the catalytic mechanism. 2 short sequence motifs (HXTX) span residues 34 to 37 (HITL) and 116 to 119 (HITI). The active-site Proton acceptor is H116.

Belongs to the 2H phosphoesterase superfamily. YjcG family.

The chain is Putative phosphoesterase ABC1741 from Shouchella clausii (strain KSM-K16) (Alkalihalobacillus clausii).